The chain runs to 433 residues: 23S rRNA (uracil(1939)-C(5))-methyltransferase RlmD (433 aa).

Positions 10–68 (RTTTRQIITVSVNDLDSFGQGVARHNGKTLFIPGLLPQENAEVTVTEDKKQYARAKVVR) constitute a TRAM domain. [4Fe-4S] cluster contacts are provided by cysteine 81, cysteine 87, cysteine 90, and cysteine 162. S-adenosyl-L-methionine contacts are provided by glutamine 265, phenylalanine 294, asparagine 299, glutamate 315, asparagine 342, and aspartate 363. Cysteine 389 acts as the Nucleophile in catalysis.

Belongs to the class I-like SAM-binding methyltransferase superfamily. RNA M5U methyltransferase family. RlmD subfamily.

It catalyses the reaction uridine(1939) in 23S rRNA + S-adenosyl-L-methionine = 5-methyluridine(1939) in 23S rRNA + S-adenosyl-L-homocysteine + H(+). Functionally, catalyzes the formation of 5-methyl-uridine at position 1939 (m5U1939) in 23S rRNA. This Escherichia coli (strain UTI89 / UPEC) protein is 23S rRNA (uracil(1939)-C(5))-methyltransferase RlmD.